The sequence spans 1204 residues: E3 ubiquitin-protein ligase DZIP3 (1204 aa).

Disordered stretches follow at residues 1 to 22 (MDSL…QTKE) and 640 to 681 (SIPS…EQVS). Basic and acidic residues predominate over residues 649 to 658 (SVKDLQEVKS). Over residues 659 to 668 (KTKKKKRTKS) the composition is skewed to basic residues. Coiled coils occupy residues 746–861 (KETE…TSRA) and 906–941 (QLKA…KVKQ). Over residues 1088–1098 (PKKSESEEKSA) the composition is skewed to basic and acidic residues. The interval 1088-1141 (PKKSESEEKSAQDGNNASPSHTASQPNAPQDPKSAQGSATWEGDKDMDNEEEEE) is disordered. The span at 1099–1126 (QDGNNASPSHTASQPNAPQDPKSAQGSA) shows a compositional bias: polar residues. Residues 1132–1141 (KDMDNEEEEE) show a composition bias toward acidic residues. Residues 1144–1184 (CVICHENLSPENLSVLPCAHKFHSQCIRPWLMQQGTCPTCR) form an RING-type; atypical zinc finger.

In terms of assembly, probably interacts with DAZL.

It is found in the cytoplasm. The catalysed reaction is S-ubiquitinyl-[E2 ubiquitin-conjugating enzyme]-L-cysteine + [acceptor protein]-L-lysine = [E2 ubiquitin-conjugating enzyme]-L-cysteine + N(6)-ubiquitinyl-[acceptor protein]-L-lysine.. It functions in the pathway protein modification; protein ubiquitination. Functionally, E3 Ubiquitin ligase proteins mediate ubiquitination and subsequent proteasomal degradation of target proteins. E3 ubiquitin ligases accept ubiquitin from an E2 ubiquitin-conjugating enzyme in the form of a thioester and then directly transfers the ubiquitin to targeted substrates. Able to specifically bind RNA. The chain is E3 ubiquitin-protein ligase DZIP3 (Dzip3) from Mus musculus (Mouse).